A 359-amino-acid polypeptide reads, in one-letter code: Histamine H2 receptor (359 aa).

Residues 1–22 are Extracellular-facing; it reads MAPNGTASSFCLDSTACKITIT. Asn4 is a glycosylation site (N-linked (GlcNAc...) asparagine). The chain crosses the membrane as a helical span at residues 23-44; that stretch reads VVLAVLILITVAGNVVVCLAVG. The Cytoplasmic segment spans residues 45–57; sequence LNRRLRNLTNCFI. Residues 58–81 form a helical membrane-spanning segment; it reads VSLAITDLLLGLLVLPFSAIYQLS. At 82–92 the chain is on the extracellular side; that stretch reads CKWSFGKVFCN. An intrachain disulfide couples Cys91 to Cys174. Residues 93–114 traverse the membrane as a helical segment; that stretch reads IYTSLDVMLCTASILNLFMISL. Over 115-134 the chain is Cytoplasmic; sequence DRYCAVMDPLRYPVLVTPVR. The chain crosses the membrane as a helical span at residues 135 to 159; the sequence is VAISLVLIWVISITLSFLSIHLGWN. Topologically, residues 160–180 are extracellular; it reads SRNETSKGNHTTSKCKVQVNE. Residues 181–204 traverse the membrane as a helical segment; that stretch reads VYGLVDGLVTFYLPLLIMCITYYR. Residues 205–234 lie on the Cytoplasmic side of the membrane; the sequence is IFKVARDQAKRINHISSWKAATIREHKATV. A helical membrane pass occupies residues 235-258; it reads TLAAVMGAFIICWFPYFTAFVYRG. The Extracellular portion of the chain corresponds to 259–267; the sequence is LRGDDAINE. The chain crosses the membrane as a helical span at residues 268 to 289; that stretch reads VLEAIVLWLGYANSALNPILYA. Topologically, residues 290 to 359 are cytoplasmic; the sequence is ALNRDFRTGY…VTAPQGATDR (70 aa). The S-palmitoyl cysteine moiety is linked to residue Cys305. Residues 316–340 are disordered; sequence SLRSNASQLSRTQSREPRQQEEKPL. Residues 317-327 are compositionally biased toward polar residues; sequence LRSNASQLSRT. Over residues 328–340 the composition is skewed to basic and acidic residues; that stretch reads QSREPRQQEEKPL.

This sequence belongs to the G-protein coupled receptor 1 family.

The protein resides in the cell membrane. In terms of biological role, the H2 subclass of histamine receptors mediates gastric acid secretion. Also appears to regulate gastrointestinal motility and intestinal secretion. Possible role in regulating cell growth and differentiation. The activity of this receptor is mediated by G proteins which activate adenylyl cyclase and, through a separate G protein-dependent mechanism, the phosphoinositide/protein kinase (PKC) signaling pathway. This is Histamine H2 receptor (HRH2) from Gorilla gorilla gorilla (Western lowland gorilla).